We begin with the raw amino-acid sequence, 311 residues long: Ribosomal RNA small subunit methyltransferase H 1 (311 aa).

S-adenosyl-L-methionine contacts are provided by residues 33–35 (AGH), Asp-53, Phe-80, Asp-101, and Gln-108.

The protein belongs to the methyltransferase superfamily. RsmH family.

It is found in the cytoplasm. It catalyses the reaction cytidine(1402) in 16S rRNA + S-adenosyl-L-methionine = N(4)-methylcytidine(1402) in 16S rRNA + S-adenosyl-L-homocysteine + H(+). Specifically methylates the N4 position of cytidine in position 1402 (C1402) of 16S rRNA. The protein is Ribosomal RNA small subunit methyltransferase H 1 of Alkaliphilus metalliredigens (strain QYMF).